Here is a 319-residue protein sequence, read N- to C-terminus: DNA-directed RNA polymerases IV and V subunit 3B (319 aa).

Met1 is subject to N-acetylmethionine.

This sequence belongs to the archaeal Rpo3/eukaryotic RPB3 RNA polymerase subunit family. As to quaternary structure, component of the RNA polymerase IV and V complexes. Interacts with NRPB11, SHH1, GRP23 and NRPD1.

Its subcellular location is the nucleus. Its function is as follows. DNA-dependent RNA polymerase catalyzes the transcription of DNA into RNA using the four ribonucleoside triphosphates as substrates. Component of RNA polymerases IV and V which mediate short-interfering RNAs (siRNA) accumulation and subsequent RNA-directed DNA methylation-dependent (RdDM) transcriptional gene silencing (TGS) of endogenous repeated sequences, including transposable elements. This Arabidopsis thaliana (Mouse-ear cress) protein is DNA-directed RNA polymerases IV and V subunit 3B (NRPD3B).